The sequence spans 201 residues: MRQDVSLLSTSGSQKNPLGNVKIAPGAVVCVESEIKGDVTIGPRTVVHPKARIYAEAGPIIIGEGNLIEEQAFIRNSFPENIAPDSDVEPKTMIIGTNNVFEVGCYSQAMKMGDNNVIESKAFVGRNVILTSGCIIGACCQVDTCEVIPENTVIYGSDCLRRVQTERPQPQTLQLDFLMKILPNYHHLKKTTKNISTPMKS.

Belongs to the dynactin subunits 5/6 family. Dynactin subunit 6 subfamily. In terms of assembly, member of the pointed-end complex of the dynactin shoulder complex which contains dctn4, dctn5 and dctn6 subunits and Actr10. Within the complex dctn6 forms a heterodimer with dctn5. Interacts with plk1.

The protein localises to the cytoplasm. The protein resides in the cytoskeleton. Its subcellular location is the chromosome. It is found in the centromere. It localises to the kinetochore. Its function is as follows. Part of the dynactin complex that activates the molecular motor dynein for ultra-processive transport along microtubules. This is Dynactin subunit 6 (dctn6) from Xenopus tropicalis (Western clawed frog).